Consider the following 300-residue polypeptide: Lysophosphatidic acid:oleoyl-CoA acyltransferase 1 (300 aa).

Residues 33–53 (LLGILGVKTIIMLPLIMLYLL) form a helical membrane-spanning segment. Residues 101–106 (CTSPLD) carry the HXXXXD motif motif.

This sequence belongs to the 1-acyl-sn-glycerol-3-phosphate acyltransferase family.

Its subcellular location is the lipid droplet. It localises to the endoplasmic reticulum membrane. The catalysed reaction is a 1-acyl-sn-glycero-3-phosphate + an acyl-CoA = a 1,2-diacyl-sn-glycero-3-phosphate + CoA. It catalyses the reaction 1-hexadecanoyl-sn-glycero-3-phosphate + (9Z)-octadecenoyl-CoA = 1-hexadecanoyl-2-(9Z-octadecenoyl)-sn-glycero-3-phosphate + CoA. In terms of biological role, acyl-CoA-dependent lysophosphatidic acid acyltransferase with preference for oleoyl-CoA. Involved in triacylglyceride homeostasis and lipid droplet formation. Involved in vacuolar protein sorting. The protein is Lysophosphatidic acid:oleoyl-CoA acyltransferase 1 of Saccharomyces cerevisiae (strain ATCC 204508 / S288c) (Baker's yeast).